Consider the following 200-residue polypeptide: Outer-membrane lipoprotein carrier protein (200 aa).

Positions 1–18 (MIGLFLAAPLVLSSAVWA) are cleaved as a signal peptide.

This sequence belongs to the LolA family. As to quaternary structure, monomer.

It is found in the periplasm. Functionally, participates in the translocation of lipoproteins from the inner membrane to the outer membrane. Only forms a complex with a lipoprotein if the residue after the N-terminal Cys is not an aspartate (The Asp acts as a targeting signal to indicate that the lipoprotein should stay in the inner membrane). This chain is Outer-membrane lipoprotein carrier protein, found in Photobacterium profundum (strain SS9).